The following is a 307-amino-acid chain: Aspartate carbamoyltransferase catalytic subunit (307 aa).

2 residues coordinate carbamoyl phosphate: arginine 59 and threonine 60. Lysine 87 contacts L-aspartate. Residues arginine 109, histidine 137, and glutamine 140 each coordinate carbamoyl phosphate. Residues arginine 173 and arginine 223 each contribute to the L-aspartate site. Residues glycine 266 and proline 267 each contribute to the carbamoyl phosphate site.

It belongs to the aspartate/ornithine carbamoyltransferase superfamily. ATCase family. In terms of assembly, heterododecamer (2C3:3R2) of six catalytic PyrB chains organized as two trimers (C3), and six regulatory PyrI chains organized as three dimers (R2).

The catalysed reaction is carbamoyl phosphate + L-aspartate = N-carbamoyl-L-aspartate + phosphate + H(+). The protein operates within pyrimidine metabolism; UMP biosynthesis via de novo pathway; (S)-dihydroorotate from bicarbonate: step 2/3. Its function is as follows. Catalyzes the condensation of carbamoyl phosphate and aspartate to form carbamoyl aspartate and inorganic phosphate, the committed step in the de novo pyrimidine nucleotide biosynthesis pathway. The sequence is that of Aspartate carbamoyltransferase catalytic subunit from Helicobacter pylori (strain G27).